Consider the following 298-residue polypeptide: Zinc import ATP-binding protein ZnuC (298 aa).

The 216-residue stretch at 17-232 (IELRNAGVYR…PEYVRLFGSR (216 aa)) folds into the ABC transporter domain. 49-56 (GPNGAGKS) provides a ligand contact to ATP. The segment at 273 to 298 (RGHCHVEDGHHHDHEHHHHEGGQPRA) is disordered. Basic and acidic residues predominate over residues 276–298 (CHVEDGHHHDHEHHHHEGGQPRA).

It belongs to the ABC transporter superfamily. Zinc importer (TC 3.A.1.15.5) family. The complex is composed of two ATP-binding proteins (ZnuC), two transmembrane proteins (ZnuB) and a solute-binding protein (ZnuA).

It is found in the cell inner membrane. It catalyses the reaction Zn(2+)(out) + ATP(in) + H2O(in) = Zn(2+)(in) + ADP(in) + phosphate(in) + H(+)(in). Its function is as follows. Part of the ABC transporter complex ZnuABC involved in zinc import. Responsible for energy coupling to the transport system. This chain is Zinc import ATP-binding protein ZnuC, found in Brucella suis biovar 1 (strain 1330).